Here is a 450-residue protein sequence, read N- to C-terminus: Glucose-6-phosphate isomerase (450 aa).

Catalysis depends on Glu-290, which acts as the Proton donor. Catalysis depends on residues His-311 and Lys-425.

The protein belongs to the GPI family.

The protein resides in the cytoplasm. It carries out the reaction alpha-D-glucose 6-phosphate = beta-D-fructose 6-phosphate. Its pathway is carbohydrate biosynthesis; gluconeogenesis. It functions in the pathway carbohydrate degradation; glycolysis; D-glyceraldehyde 3-phosphate and glycerone phosphate from D-glucose: step 2/4. Functionally, catalyzes the reversible isomerization of glucose-6-phosphate to fructose-6-phosphate. The protein is Glucose-6-phosphate isomerase of Alkaliphilus metalliredigens (strain QYMF).